The sequence spans 431 residues: Glutamate-1-semialdehyde 2,1-aminomutase (431 aa).

Position 269 is an N6-(pyridoxal phosphate)lysine (Lys-269).

The protein belongs to the class-III pyridoxal-phosphate-dependent aminotransferase family. HemL subfamily. As to quaternary structure, homodimer. Pyridoxal 5'-phosphate is required as a cofactor.

It is found in the cytoplasm. The catalysed reaction is (S)-4-amino-5-oxopentanoate = 5-aminolevulinate. The protein operates within porphyrin-containing compound metabolism; protoporphyrin-IX biosynthesis; 5-aminolevulinate from L-glutamyl-tRNA(Glu): step 2/2. Its pathway is porphyrin-containing compound metabolism; chlorophyll biosynthesis. The protein is Glutamate-1-semialdehyde 2,1-aminomutase of Chlorobaculum parvum (strain DSM 263 / NCIMB 8327) (Chlorobium vibrioforme subsp. thiosulfatophilum).